Here is an 843-residue protein sequence, read N- to C-terminus: MKTKLWLLLVLLLSALIFSETTIVVHYHRYDGKYDGWNLWIWPVEPVSQEGKAYQFTGEDDFGKVAVVKLPMDLTKVGIIVRLNEWQAKDVAKDRFIEIKDGKAEVWILQGVEEIFYEKPDTSPRIFFAQARSNKVIEAFLTNPVDTKKKELFKVTVDGKEIPVSRVEKADPTDIDVTNYVRIVLSESLKEEDLRKDVELIIEGYKPARVIMMEILDDYYYDGELGAVYSPEKTIFRVWSPVSKWVKVLLFKNGEDTEPYQVVNMEYKGNGVWEAVVEGDLDGVFYLYQLENYGKIRTTVDPYSKAVYANSKKSAVVNLARTNPEGWENDRGPKIEGYEDAIIYEIHIADITGLENSGVKNKGLYLGLTEENTKGPGGVTTGLSHLVELGVTHVHILPFFDFYTGDELDKDFEKYYNWGYDPYLFMVPEGRYSTDPKNPHTRIREVKEMVKALHKHGIGVIMDMVFPHTYGIGELSAFDQTVPYYFYRIDKTGAYLNESGCGNVIASERPMMRKFIVDTVTYWVKEYHIDGFRFDQMGLIDKKTMLEVERALHKIDPTIILYGEPWGGWGAPIRFGKSDVAGTHVAAFNDEFRDAIRGSVFNPSVKGFVMGGYGKETKIKRGVVGSINYDGKLIKSFALDPEETINYAACHDNHTLWDKNYLAAKADKKKEWTEEELKNAQKLAGAILLTSQGVPFLHGGQDFCRTKNFNDNSYNAPISINGFDYERKLQFIDVFNYHKGLIKLRKEHPAFRLKNAEEIKKHLEFLPGGRRIVAFMLKDHAGGDPWKDIVVIYNGNLEKTTYKLPEGKWNVVVNSQKAGTEVIETVEGTIELDPLSAYVLYRE.

An N-terminal signal peptide occupies residues 1–19 (MKTKLWLLLVLLLSALIFS). Residue aspartate 535 is the Nucleophile of the active site. Glutamate 564 serves as the catalytic Proton donor.

Belongs to the glycosyl hydrolase 13 family.

It carries out the reaction Hydrolysis of (1-&gt;6)-alpha-D-glucosidic linkages in pullulan, amylopectin and glycogen, and in the alpha- and beta-limit dextrins of amylopectin and glycogen.. This chain is Pullulanase (pulA), found in Thermotoga maritima (strain ATCC 43589 / DSM 3109 / JCM 10099 / NBRC 100826 / MSB8).